The following is a 122-amino-acid chain: S-adenosylmethionine decarboxylase proenzyme (122 aa).

The active-site Schiff-base intermediate with substrate; via pyruvic acid is S69. Residue S69 is modified to Pyruvic acid (Ser); by autocatalysis. The active-site Proton acceptor; for processing activity is H74. The Proton donor; for catalytic activity role is filled by C89.

The protein belongs to the prokaryotic AdoMetDC family. Type 1 subfamily. As to quaternary structure, heterotetramer of two alpha and two beta chains arranged as a dimer of alpha/beta heterodimers. Pyruvate serves as cofactor. Is synthesized initially as an inactive proenzyme. Formation of the active enzyme involves a self-maturation process in which the active site pyruvoyl group is generated from an internal serine residue via an autocatalytic post-translational modification. Two non-identical subunits are generated from the proenzyme in this reaction, and the pyruvate is formed at the N-terminus of the alpha chain, which is derived from the carboxyl end of the proenzyme. The post-translation cleavage follows an unusual pathway, termed non-hydrolytic serinolysis, in which the side chain hydroxyl group of the serine supplies its oxygen atom to form the C-terminus of the beta chain, while the remainder of the serine residue undergoes an oxidative deamination to produce ammonia and the pyruvoyl group blocking the N-terminus of the alpha chain.

It catalyses the reaction S-adenosyl-L-methionine + H(+) = S-adenosyl 3-(methylsulfanyl)propylamine + CO2. The protein operates within amine and polyamine biosynthesis; S-adenosylmethioninamine biosynthesis; S-adenosylmethioninamine from S-adenosyl-L-methionine: step 1/1. Its function is as follows. Catalyzes the decarboxylation of S-adenosylmethionine to S-adenosylmethioninamine (dcAdoMet), the propylamine donor required for the synthesis of the polyamines spermine and spermidine from the diamine putrescine. The chain is S-adenosylmethionine decarboxylase proenzyme from Sulfolobus acidocaldarius (strain ATCC 33909 / DSM 639 / JCM 8929 / NBRC 15157 / NCIMB 11770).